A 313-amino-acid chain; its full sequence is Ornithine carbamoyltransferase (313 aa).

Carbamoyl phosphate-binding positions include 61 to 64 (STRT), Q88, R112, and 139 to 142 (HPCQ). L-ornithine contacts are provided by residues N170, D228, and 232-233 (SM). Carbamoyl phosphate is bound by residues 268-269 (CL) and R296.

Belongs to the aspartate/ornithine carbamoyltransferase superfamily. OTCase family.

The protein localises to the cytoplasm. It carries out the reaction carbamoyl phosphate + L-ornithine = L-citrulline + phosphate + H(+). Its pathway is amino-acid biosynthesis; L-arginine biosynthesis; L-arginine from L-ornithine and carbamoyl phosphate: step 1/3. Its function is as follows. Reversibly catalyzes the transfer of the carbamoyl group from carbamoyl phosphate (CP) to the N(epsilon) atom of ornithine (ORN) to produce L-citrulline. The protein is Ornithine carbamoyltransferase of Bordetella parapertussis (strain 12822 / ATCC BAA-587 / NCTC 13253).